The following is a 214-amino-acid chain: Transcription factor MYB24 (214 aa).

HTH myb-type domains follow at residues 14-66 (DAEV…LNYL) and 67-121 (RPDV…QKYI). 2 DNA-binding regions (H-T-H motif) span residues 42-66 (WNSLAKSAGLKRTGKSCRLRWLNYL) and 94-117 (WSKIAKHLPGRTDNEIKNFWRTKI).

Interacts (via N-terminus) with TIFY10A/JAZ1, TIFY5A/JAZ8 AND TIFY3A/JAZ11. In terms of tissue distribution, expressed specifically in flowers. Expressed in all four whorls of the flower and in the vascular tissue of stamen filament and sepals. Detected in male and female gametophytes, especially in microspores and ovules. Weakly expressed in petals and the upper part of pistils.

Its subcellular location is the nucleus. Transcription factor acting redundantly with MYB21 and MYB57 to control stamen filament elongation in the late developed flowers. Contributes with MYB21 to induction of MYB108 by jasmonate. Repressed at the transcript levels by DELLA proteins. The sequence is that of Transcription factor MYB24 (MYB24) from Arabidopsis thaliana (Mouse-ear cress).